We begin with the raw amino-acid sequence, 630 residues long: 1-deoxy-D-xylulose-5-phosphate synthase (630 aa).

Residues His-72 and 113–115 each bind thiamine diphosphate; that span reads GHS. Asp-144 contributes to the Mg(2+) binding site. Residues 145 to 146, Asn-173, Tyr-284, and Glu-367 each bind thiamine diphosphate; that span reads GA. Asn-173 is a binding site for Mg(2+).

This sequence belongs to the transketolase family. DXPS subfamily. As to quaternary structure, homodimer. The cofactor is Mg(2+). It depends on thiamine diphosphate as a cofactor.

It carries out the reaction D-glyceraldehyde 3-phosphate + pyruvate + H(+) = 1-deoxy-D-xylulose 5-phosphate + CO2. Its pathway is metabolic intermediate biosynthesis; 1-deoxy-D-xylulose 5-phosphate biosynthesis; 1-deoxy-D-xylulose 5-phosphate from D-glyceraldehyde 3-phosphate and pyruvate: step 1/1. Functionally, catalyzes the acyloin condensation reaction between C atoms 2 and 3 of pyruvate and glyceraldehyde 3-phosphate to yield 1-deoxy-D-xylulose-5-phosphate (DXP). The chain is 1-deoxy-D-xylulose-5-phosphate synthase from Geobacillus sp. (strain WCH70).